Reading from the N-terminus, the 406-residue chain is Kelch domain-containing protein 2 (406 aa).

Kelch repeat units follow at residues 31–85 (ERSG…NTEG), 92–136 (SGSC…ERID), 148–207 (LGVW…AWSQ), 221–259 (HACA…NELI), 271–311 (HSLT…IQFN), and 322–359 (HTAC…IFSV).

Component of a CRL2(KLHDC2) E3 ubiquitin-protein ligase complex, also named ECS(KLHDC2) complex, composed of CUL2, Elongin BC (ELOB and ELOC), RBX1 and substrate-specific adapter KLHDC2. May form oligomers as a KLHDC2-ELOB-ELOC complex; this interaction is autoinhibitory for the E3 ligase complex as the substrate-binding site of KLHDC2 is blocked in the oligomer. Interacts with CREB3; interaction is direct and specific as it does not interact with CREB1, ATF4, ATF6, JUN, FOS, CEBPA or herpes simplex virus transactivator VP16. Post-translationally, autoubiquitinated by the CRL2(KLHDC2) E3 ligase complex.

The protein localises to the nucleus. It functions in the pathway protein modification; protein ubiquitination. Functionally, substrate-recognition component of a Cul2-RING (CRL2) E3 ubiquitin-protein ligase complex of the DesCEND (destruction via C-end degrons) pathway, which recognizes a C-degron located at the extreme C terminus of target proteins, leading to their ubiquitination and degradation. The C-degron recognized by the DesCEND pathway is usually a motif of less than ten residues and can be present in full-length proteins, truncated proteins or proteolytically cleaved forms. The CRL2(KLHDC2) complex specifically recognizes proteins with a diglycine (Gly-Gly) at the C-terminus, leading to their ubiquitination and degradation. The CRL2(KLHDC2) complex mediates ubiquitination and degradation of truncated SELENOK and SELENOS selenoproteins produced by failed UGA/Sec decoding, which end with a diglycine. The CRL2(KLHDC2) complex also recognizes proteolytically cleaved proteins ending with Gly-Gly, such as the N-terminal fragment of USP1, leading to their degradation. May also act as an indirect repressor of CREB3-mediated transcription by interfering with CREB3-DNA-binding. This is Kelch domain-containing protein 2 from Rattus norvegicus (Rat).